A 155-amino-acid chain; its full sequence is Transcriptional repressor NrdR (155 aa).

Residues 3 to 34 fold into a zinc finger; the sequence is CPFCHAEETKVVDSRLVADGAQVRRRRECLEC. An ATP-cone domain is found at 49-139; it reads PLIIKRDGRR…VYKRFKDVSD (91 aa).

The protein belongs to the NrdR family. Zn(2+) is required as a cofactor.

Its function is as follows. Negatively regulates transcription of bacterial ribonucleotide reductase nrd genes and operons by binding to NrdR-boxes. This Legionella pneumophila (strain Paris) protein is Transcriptional repressor NrdR.